The sequence spans 323 residues: tRNA U34 carboxymethyltransferase (323 aa).

Residues Lys-90, Trp-104, Lys-109, Gly-129, 182–183 (IE), Met-197, Tyr-201, and Arg-316 contribute to the carboxy-S-adenosyl-L-methionine site.

This sequence belongs to the class I-like SAM-binding methyltransferase superfamily. CmoB family. Homotetramer.

It carries out the reaction carboxy-S-adenosyl-L-methionine + 5-hydroxyuridine(34) in tRNA = 5-carboxymethoxyuridine(34) in tRNA + S-adenosyl-L-homocysteine + H(+). Functionally, catalyzes carboxymethyl transfer from carboxy-S-adenosyl-L-methionine (Cx-SAM) to 5-hydroxyuridine (ho5U) to form 5-carboxymethoxyuridine (cmo5U) at position 34 in tRNAs. The sequence is that of tRNA U34 carboxymethyltransferase from Idiomarina loihiensis (strain ATCC BAA-735 / DSM 15497 / L2-TR).